We begin with the raw amino-acid sequence, 347 residues long: A-type ATP synthase subunit C (347 aa).

It belongs to the V-ATPase V0D/AC39 subunit family. Has multiple subunits with at least A(3), B(3), C, D, E, F, H, I and proteolipid K(x).

The protein resides in the cell membrane. In terms of biological role, component of the A-type ATP synthase that produces ATP from ADP in the presence of a proton gradient across the membrane. The chain is A-type ATP synthase subunit C from Haloquadratum walsbyi (strain DSM 16790 / HBSQ001).